The primary structure comprises 172 residues: Shikimate kinase (172 aa).

Residue 14 to 19 participates in ATP binding; the sequence is GAGKST. S18 is a Mg(2+) binding site. The substrate site is built by D36, R60, and G82. R120 provides a ligand contact to ATP. R140 is a substrate binding site. Residue Q157 participates in ATP binding.

Belongs to the shikimate kinase family. Monomer. Requires Mg(2+) as cofactor.

It is found in the cytoplasm. It carries out the reaction shikimate + ATP = 3-phosphoshikimate + ADP + H(+). It participates in metabolic intermediate biosynthesis; chorismate biosynthesis; chorismate from D-erythrose 4-phosphate and phosphoenolpyruvate: step 5/7. In terms of biological role, catalyzes the specific phosphorylation of the 3-hydroxyl group of shikimic acid using ATP as a cosubstrate. This is Shikimate kinase from Aeromonas salmonicida (strain A449).